A 211-amino-acid polypeptide reads, in one-letter code: MELEDIRRDYSLGGLRRADLPQAPIELFELWLKQAVEAKLTDPTAMTVATVDKKGQPFQRIVLLKHFDSTGFVFYTNLASRKAQHLEDNSKISLHFPWHPLERQVHITGTAEKLTALENMKYFTSRPKESQIAAWASKQSSRLTARAALEGKYLELKQQFSKGEIPVPKFWGGFRVKIDSIEFWQGGDSRLHDRFLYSKDQDKWVIDRLAP.

Residues 7–10 and lysine 65 each bind substrate; that span reads RRDY. FMN-binding positions include 60–65, 75–76, arginine 81, lysine 82, and glutamine 104; these read RIVLLK and YT. The substrate site is built by tyrosine 122, arginine 126, and serine 130. FMN-binding positions include 139-140 and tryptophan 184; that span reads QS. Residue 190–192 participates in substrate binding; that stretch reads RLH. Arginine 194 serves as a coordination point for FMN.

It belongs to the pyridoxamine 5'-phosphate oxidase family. In terms of assembly, homodimer. The cofactor is FMN.

It carries out the reaction pyridoxamine 5'-phosphate + O2 + H2O = pyridoxal 5'-phosphate + H2O2 + NH4(+). The catalysed reaction is pyridoxine 5'-phosphate + O2 = pyridoxal 5'-phosphate + H2O2. It participates in cofactor metabolism; pyridoxal 5'-phosphate salvage; pyridoxal 5'-phosphate from pyridoxamine 5'-phosphate: step 1/1. The protein operates within cofactor metabolism; pyridoxal 5'-phosphate salvage; pyridoxal 5'-phosphate from pyridoxine 5'-phosphate: step 1/1. In terms of biological role, catalyzes the oxidation of either pyridoxine 5'-phosphate (PNP) or pyridoxamine 5'-phosphate (PMP) into pyridoxal 5'-phosphate (PLP). This Aliivibrio salmonicida (strain LFI1238) (Vibrio salmonicida (strain LFI1238)) protein is Pyridoxine/pyridoxamine 5'-phosphate oxidase.